Consider the following 239-residue polypeptide: MYYCNRDNCNQTDNAKDKAHPRNLIPELCRQFYNLGWVTGTGGGISLKYGDEIYIAPSGVQKERIQPDDLFVCDIDEKDISSPPPYRNLKKSQCTPLFMNAYTMRDAGAVIHTHSKAAVMATLMFPGKEFLITHQEMIKGIKKGTSGGYYRYDDMLAVPIVENTPEEKDLKERMARAMTEYPDTCAVLVRRHGVYVWGDTWEKAKTMCECYDYLFEIAVQMKQHGLDPSAIPTEEKGIV.

C94 is a substrate binding site. Zn(2+) is bound by residues H112 and H114. E136 serves as the catalytic Proton donor/acceptor. Residue H192 coordinates Zn(2+).

The protein belongs to the aldolase class II family. MtnB subfamily. Zn(2+) serves as cofactor.

Its subcellular location is the cytoplasm. The catalysed reaction is 5-(methylsulfanyl)-D-ribulose 1-phosphate = 5-methylsulfanyl-2,3-dioxopentyl phosphate + H2O. It functions in the pathway amino-acid biosynthesis; L-methionine biosynthesis via salvage pathway; L-methionine from S-methyl-5-thio-alpha-D-ribose 1-phosphate: step 2/6. Its function is as follows. Catalyzes the dehydration of methylthioribulose-1-phosphate (MTRu-1-P) into 2,3-diketo-5-methylthiopentyl-1-phosphate (DK-MTP-1-P). Functions in the methionine salvage pathway. May play a role in apoptosis. In Xenopus tropicalis (Western clawed frog), this protein is Methylthioribulose-1-phosphate dehydratase.